The chain runs to 254 residues: Putative electron transfer flavoprotein subunit YdiQ (254 aa).

This sequence belongs to the ETF beta-subunit/FixA family. YdiR and YdiQ form a heterodimer.

In terms of biological role, may play a role in a redox process. In Escherichia coli (strain K12), this protein is Putative electron transfer flavoprotein subunit YdiQ (ydiQ).